Here is a 557-residue protein sequence, read N- to C-terminus: Potassium-transporting ATPase potassium-binding subunit (557 aa).

12 helical membrane-spanning segments follow: residues 5-25, 63-83, 132-152, 170-190, 253-273, 283-303, 329-349, 356-376, 379-399, 416-436, 484-504, and 526-546; these read GFLL…PLGS, LSAI…MLLG, GLTV…FAFI, LLRI…LFFI, FVQM…FGEV, LLWA…WAEV, VLVS…AVIA, ALGG…FGGV, GLYG…LMIG, LTAL…ALAM, LLAF…MAIA, and LFVG…FIPA.

Belongs to the KdpA family. The system is composed of three essential subunits: KdpA, KdpB and KdpC.

It is found in the cell inner membrane. Part of the high-affinity ATP-driven potassium transport (or Kdp) system, which catalyzes the hydrolysis of ATP coupled with the electrogenic transport of potassium into the cytoplasm. This subunit binds the periplasmic potassium ions and delivers the ions to the membrane domain of KdpB through an intramembrane tunnel. This Escherichia coli (strain SMS-3-5 / SECEC) protein is Potassium-transporting ATPase potassium-binding subunit.